Reading from the N-terminus, the 475-residue chain is Equilibrative nucleoside transporter 3 (475 aa).

The Cytoplasmic portion of the chain corresponds to 1 to 51 (MAFASEDIAYHSSNAVYRVPSNRHEADQEALLGKPLDYPAPGLQRPEDRFN). Ser-21 carries the phosphoserine modification. The Dileucine internalization motif signature appears at 31–32 (LL). A helical transmembrane segment spans residues 52-72 (GAYIIFFCLGIGGLLPWNFFV). At 73–105 (TAKEYWAFKLRNCSSPASGKDPEDADILNYFES) the chain is on the extracellular side. A glycan (N-linked (GlcNAc...) asparagine) is linked at Asn-84. Residues 106–126 (YLAVASTVPSLLFLVANFLLV) form a helical membrane-spanning segment. The Cytoplasmic portion of the chain corresponds to 127–132 (NRIRVH). Residues 133–153 (VRVLASLSVSLAIFVVMAVLV) traverse the membrane as a helical segment. The Extracellular portion of the chain corresponds to 154–162 (RVDTSSWTR). A helical transmembrane segment spans residues 163 to 183 (GFFSIAMACMAIISSSSTIFN). The Cytoplasmic portion of the chain corresponds to 184 to 199 (SSVYGLTGSFPMRNAQ). A helical membrane pass occupies residues 200–220 (ALISGGAMGGTVSAVASLVDL). The Extracellular portion of the chain corresponds to 221–230 (AASSDVRDSA). The chain crosses the membrane as a helical span at residues 231–251 (LAFFLTAAVFLGLCVGLYLLL). The Cytoplasmic segment spans residues 252–305 (PQLEYARYYMRPVVPIHVFSSEDSPPRDAPSTSSVAPASRAVHTPPLGPILKKT). Positions 272 to 291 (SEDSPPRDAPSTSSVAPASR) are disordered. Residues 306–326 (AGLGFCAVFLYFITALIFPAI) form a helical membrane-spanning segment. The Extracellular segment spans residues 327-340 (STNIQPMHKGTGSP). A helical membrane pass occupies residues 341–361 (WTSKFYVPLTVFLLFNFADLC). Residues 362–377 (GRQVTAWIQVPGPRSK) lie on the Cytoplasmic side of the membrane. A helical membrane pass occupies residues 378 to 398 (LLPILAVSRVCLVPLFLLCNY). Over 399–414 (QPRSHLTLVLFQSDIY) the chain is Extracellular. Residues 415 to 437 (PILFTCLLGLSNGYLSTLVLMYG) traverse the membrane as a helical segment. Over 438–450 (PKIVPRELAEATS) the chain is Cytoplasmic. A helical membrane pass occupies residues 451–471 (VVMLFYMSLGLMLGSACAALL). The Extracellular portion of the chain corresponds to 472-475 (EHFI).

It belongs to the SLC29A/ENT transporter (TC 2.A.57) family. Widely expressed. Highest levels in heart and liver (at protein level).

The protein localises to the lysosome membrane. The protein resides in the late endosome membrane. It localises to the mitochondrion membrane. Its subcellular location is the cell membrane. It carries out the reaction adenosine(in) = adenosine(out). The enzyme catalyses guanosine(in) = guanosine(out). It catalyses the reaction inosine(in) = inosine(out). The catalysed reaction is uridine(out) = uridine(in). It carries out the reaction cytidine(in) = cytidine(out). The enzyme catalyses thymidine(in) = thymidine(out). It catalyses the reaction 2'-deoxyadenosine(in) = 2'-deoxyadenosine(out). The catalysed reaction is 2'-deoxycytidine(in) = 2'-deoxycytidine(out). It carries out the reaction guanine(out) = guanine(in). The enzyme catalyses uracil(in) = uracil(out). It catalyses the reaction (R)-noradrenaline(out) = (R)-noradrenaline(in). The catalysed reaction is dopamine(out) = dopamine(in). It carries out the reaction serotonin(out) = serotonin(in). The enzyme catalyses tyramine(in) = tyramine(out). It catalyses the reaction ATP(in) = ATP(out). Functionally, uniporter that mediates the facilitative transport of nucleoside across lysosomal and mitochondrial membranes. Functions as a non-electrogenic Na(+)-independent transporter. Substrate transport is pH-dependent and enhanced under acidic condition, probably reflecting the location of the transporter in acidic intracellular compartments. Proton is not a cotransporting ion but most likely change the ionization state of the transporter which dictates transport-permissible/impermissible conformation for nucleoside translocation. May direct the nucleoside transport from lysosomes to cytosol or cytosol to mitochondria to facilitate the fundamental function of salvage synthesis of nucleic acids. Involved in the transport of nucleosides (adenosine, guanosine, uridine, thymidine, cytidine and inosine) and deoxynucleosides (deoxyadenosine, deoxycytidine). Also mediates transport of purine nucleobases (adenine, guanine) and pyrimidine nucleobases (uracil). Also able to transport monoamine neurotransmitters dopamine, serotonin, noradrenaline and tyramine. Capable of transporting ATP. Mediates nucleoside export from lysosomes in macrophages, which regulates macrophage functions and numbers. The polypeptide is Equilibrative nucleoside transporter 3 (Rattus norvegicus (Rat)).